Reading from the N-terminus, the 611-residue chain is UvrABC system protein C (611 aa).

The region spanning 6 to 84 (NNPGVYRMFN…IKRLRPRFNV (79 aa)) is the GIY-YIG domain. The UVR domain maps to 194-229 (QSVKDHLAAAMQAASADLDFEHAAVYRDRLAALSHV).

This sequence belongs to the UvrC family. In terms of assembly, interacts with UvrB in an incision complex.

Its subcellular location is the cytoplasm. The UvrABC repair system catalyzes the recognition and processing of DNA lesions. UvrC both incises the 5' and 3' sides of the lesion. The N-terminal half is responsible for the 3' incision and the C-terminal half is responsible for the 5' incision. The sequence is that of UvrABC system protein C from Brucella abortus (strain 2308).